A 442-amino-acid polypeptide reads, in one-letter code: Histidine--tRNA ligase (442 aa).

Belongs to the class-II aminoacyl-tRNA synthetase family. In terms of assembly, homodimer.

It localises to the cytoplasm. It carries out the reaction tRNA(His) + L-histidine + ATP = L-histidyl-tRNA(His) + AMP + diphosphate + H(+). The polypeptide is Histidine--tRNA ligase (Helicobacter hepaticus (strain ATCC 51449 / 3B1)).